The chain runs to 249 residues: Type I iodothyronine deiodinase (249 aa).

The Extracellular portion of the chain corresponds to 1-12 (MGLPQPGLWLKR). The chain crosses the membrane as a helical; Signal-anchor for type III membrane protein span at residues 13–33 (LWVLLEVAVHVVVGKVLLILF). Residues 34–249 (PDRVKRNILA…VRAVLEKLHS (216 aa)) are Cytoplasmic-facing. Sec-126 is an active-site residue. Position 126 (Sec-126) is a non-standard amino acid, selenocysteine.

The protein belongs to the iodothyronine deiodinase family. In terms of assembly, predominantly monomer. Can form homodimers but homodimerization is not essential for enzyme activity.

The protein localises to the cell membrane. The protein resides in the endoplasmic reticulum membrane. Its subcellular location is the basolateral cell membrane. It catalyses the reaction 3,3',5-triiodo-L-thyronine + iodide + A + H(+) = L-thyroxine + AH2. The enzyme catalyses 3,3',5'-triiodo-L-thyronine + iodide + A + H(+) = L-thyroxine + AH2. The catalysed reaction is 3,3'-diiodo-L-thyronine + iodide + A + H(+) = 3,3',5'-triiodo-L-thyronine + AH2. It carries out the reaction 3,3'-diiodo-L-thyronine + iodide + A + H(+) = 3,3',5-triiodo-L-thyronine + AH2. It catalyses the reaction 3'-iodo-L-thyronine + iodide + A + H(+) = 3',5'-diiodo-L-thyronine + AH2. The enzyme catalyses 3-iodo-L-thyronine + iodide + A + H(+) = 3,5-diiodo-L-thyronine + AH2. The catalysed reaction is 3-iodo-L-thyronine + iodide + A + H(+) = 3,3'-diiodo-L-thyronine + AH2. It carries out the reaction 3,3'-diiodothyronamine + iodide + A + H(+) = 3,3',5'-triiodothyronamine + AH2. It catalyses the reaction 3'-iodothyronamine + iodide + A + H(+) = 3',5'-diiodothyronamine + AH2. The enzyme catalyses 3-iodothyronamine + iodide + A + H(+) = 3,3'-diiodothyronamine + AH2. The catalysed reaction is 3,3'-diiodothyronamine + iodide + A + H(+) = 3,3',5-triiodothyronamine + AH2. It carries out the reaction 3-iodothyronamine + iodide + A + H(+) = 3,5-diiodothyronamine + AH2. It catalyses the reaction 3,3'-diiodo-L-thyronine sulfate + iodide + A + H(+) = 3,3',5'-triiodo-L-thyronine sulfate + AH2. The enzyme catalyses 3,3',5'-triiodo-L-thyronine sulfate + iodide + A + H(+) = L-thyroxine sulfate + AH2. The catalysed reaction is 3,3'-diiodo-L-thyronine sulfate + iodide + A + H(+) = 3,3',5-triiodo-L-thyronine sulfate + AH2. Deiodination of substrates 3,3',5'-triiodothyronine, 3,3',5'-triiodothyronamine and 3',5'- diiodothyronamine are inhibited by 6n-propyl-2-thiouracil (PTU). Plays a crucial role in the metabolism of thyroid hormones (TH) and has specific roles in TH activation and inactivation by deiodination. Catalyzes the deiodination of L-thyroxine (T4) to 3,5,3'-triiodothyronine (T3), 3,3',5'-triiodothyronine (rT3) to 3,3'-diiodothyronine (3,3'-T2) and 3',5'-diiodothyronine (3',5'-T2) to 3'-monoiodothyronine (3'-T1) via outer-ring deiodination (ORD). Catalyzes the deiodination of T4 to 3,3',5'-triiodothyronine (rT3) via inner-ring deiodination (IRD). Catalyzes the deiodination of T3 to 3,3'-T2, 3,5-diiodothyronine (3,5-T2) to 3- monoiodothyronine (3-T1) and 3,3'-T2 to 3-T1 via IRD. Catalyzes the phenolic ring deiodinations of 3,3',5'-triiodothyronamine and 3',5'-diiodothyronamine. Catalyzes the phenolic ring deiodination of 3,3'-diiodothyronamine and tyrosyl ring deiodinations of 3,5,3'-triiodothyronamine and 3,5-diiodothyronamine. Catalyzes the deiodination of L-thyroxine sulfate and 3,3',5-triiodo-L-thyronine sulfate via IRD and of 3,3',5'-triiodo-L-thyronine sulfate via ORD. The polypeptide is Type I iodothyronine deiodinase (DIO1) (Homo sapiens (Human)).